The chain runs to 254 residues: MAAYKLVLIRHGESAWNLENRFSGWYDADLSPAGHEEAKRGGQALRDAGYEFDICFTSVQKRAIRTLWTVLDAIDQMWLPVVRTWRLNERHYGGLTGLNKAETAAKHGEAQVKIWRRSYDVPPPPMEPDHPFYSNISKDRRYADLTEDQLPSCESLKDTIARALPFWNEEIVPQIKEGKRVLIAAHGNSLRGIVKHLEGLSEEAIMELNLPTGIPIVYELDKNSKPIKPMQFLGDEETVRKAMEAVAAQGKAKK.

Substrate-binding positions include 10 to 17 and 23 to 24; these read RHGESAWN and SG. Residue histidine 11 is the Tele-phosphohistidine intermediate of the active site. Phosphoserine is present on residues serine 14 and serine 23. Tyrosine 26 carries the post-translational modification Phosphotyrosine. Serine 31 is modified (phosphoserine). Substrate-binding positions include arginine 62, 89–92, and lysine 100; that span reads ERHY. Residue glutamate 89 is the Proton donor/acceptor of the active site. Lysine 106 is modified (N6-acetyllysine). A substrate-binding site is contributed by 116-117; the sequence is RR. Serine 118 is modified (phosphoserine). Position 187–188 (187–188) interacts with substrate; sequence GN. The residue at position 251 (lysine 251) is an N6-acetyllysine; alternate. Lysine 251 carries the post-translational modification N6-succinyllysine; alternate. An N6-acetyllysine mark is found at lysine 253 and lysine 254.

The protein belongs to the phosphoglycerate mutase family. BPG-dependent PGAM subfamily. In terms of assembly, homodimer. In terms of processing, acetylated at Lys-253, Lys-253 and Lys-254 under high glucose condition. Acetylation increases catalytic activity. Under glucose restriction SIRT1 levels dramatically increase and it deacetylates the enzyme.

It carries out the reaction (2R)-2-phosphoglycerate = (2R)-3-phosphoglycerate. The enzyme catalyses (2R)-3-phospho-glyceroyl phosphate = (2R)-2,3-bisphosphoglycerate + H(+). Catalyzes the interconversion of 2-phosphoglycerate and 3-phosphoglyceratea crucial step in glycolysis, by using 2,3-bisphosphoglycerate. Also catalyzes the interconversion of (2R)-2,3-bisphosphoglycerate and (2R)-3-phospho-glyceroyl phosphate. The sequence is that of Phosphoglycerate mutase 1 from Pongo abelii (Sumatran orangutan).